Consider the following 74-residue polypeptide: MTTTIEQLEQKISDLECQMAFQEQTIDELNDALSQQQLLITNMQVQMKFMVGKMKTMDSSNMADASEETPPPHY.

It belongs to the SlyX family.

The sequence is that of Protein SlyX homolog from Aliivibrio fischeri (strain ATCC 700601 / ES114) (Vibrio fischeri).